The sequence spans 102 residues: MNAIPLEHGLAVAGVLFCLGLVGLMVRRNILFVLMSLEIMMNAAALAFVVAGSRWAQPDGQVMFILVISLAAAEASIGLAILMQLYRRFHTLDIDAASEMRG.

3 helical membrane passes run 6–26, 30–50, and 62–82; these read LEHG…GLMV, ILFV…AFVV, and VMFI…LAIL.

This sequence belongs to the complex I subunit 4L family. In terms of assembly, NDH-1 is composed of 13 different subunits. Subunits NuoA, H, J, K, L, M, N constitute the membrane sector of the complex.

The protein resides in the cell inner membrane. The enzyme catalyses a quinone + NADH + 5 H(+)(in) = a quinol + NAD(+) + 4 H(+)(out). In terms of biological role, NDH-1 shuttles electrons from NADH, via FMN and iron-sulfur (Fe-S) centers, to quinones in the respiratory chain. The immediate electron acceptor for the enzyme in this species is believed to be ubiquinone. Couples the redox reaction to proton translocation (for every two electrons transferred, four hydrogen ions are translocated across the cytoplasmic membrane), and thus conserves the redox energy in a proton gradient. The polypeptide is NADH-quinone oxidoreductase subunit K (Pseudomonas syringae pv. tomato (strain ATCC BAA-871 / DC3000)).